The sequence spans 432 residues: Adenylosuccinate synthetase (432 aa).

GTP-binding positions include 13-19 and 41-43; these read GDEGKGK and GHT. Aspartate 14 (proton acceptor) is an active-site residue. The Mg(2+) site is built by aspartate 14 and glycine 41. Residues 14–17, 39–42, threonine 130, arginine 144, glutamine 225, threonine 240, and arginine 304 each bind IMP; these read DEGK and NAGH. Histidine 42 serves as the catalytic Proton donor. 300-306 provides a ligand contact to substrate; that stretch reads ATTGRKR. Residues arginine 306, 332–334, and 415–417 each bind GTP; these read KLD and STG.

This sequence belongs to the adenylosuccinate synthetase family. Homodimer. Mg(2+) is required as a cofactor.

Its subcellular location is the cytoplasm. The enzyme catalyses IMP + L-aspartate + GTP = N(6)-(1,2-dicarboxyethyl)-AMP + GDP + phosphate + 2 H(+). The protein operates within purine metabolism; AMP biosynthesis via de novo pathway; AMP from IMP: step 1/2. Functionally, plays an important role in the de novo pathway of purine nucleotide biosynthesis. Catalyzes the first committed step in the biosynthesis of AMP from IMP. This chain is Adenylosuccinate synthetase, found in Vibrio cholerae serotype O1 (strain M66-2).